Here is a 103-residue protein sequence, read N- to C-terminus: Large ribosomal subunit protein uL24 (103 aa).

The protein belongs to the universal ribosomal protein uL24 family. Part of the 50S ribosomal subunit.

Its function is as follows. One of two assembly initiator proteins, it binds directly to the 5'-end of the 23S rRNA, where it nucleates assembly of the 50S subunit. One of the proteins that surrounds the polypeptide exit tunnel on the outside of the subunit. The polypeptide is Large ribosomal subunit protein uL24 (Actinobacillus pleuropneumoniae serotype 3 (strain JL03)).